We begin with the raw amino-acid sequence, 495 residues long: Carbohydrate oxidase (495 aa).

The signal sequence occupies residues 1–22; it reads MRSAFILALGLITASADALVTR. Positions 55–229 constitute an FAD-binding PCMH-type domain; sequence LPYIPTAIAQ…AVWKLATFPA (175 aa). Residues 92-154 constitute a cross-link (6-(S-cysteinyl)-8alpha-(pros-histidyl)-FAD (His-Cys)); sequence HSYASFGFGG…YGRAISHGTC (63 aa). 2 N-linked (GlcNAc...) asparagine glycosylation sites follow: Asn244 and Asn417.

The protein belongs to the oxygen-dependent FAD-linked oxidoreductase family. The cofactor is FAD. Post-translationally, the FAD cofactor is bound via a bicovalent 6-S-cysteinyl, 8alpha-N1-histidyl FAD linkage.

It is found in the secreted. The enzyme catalyses beta-D-glucose + O2 = D-glucono-1,5-lactone + H2O2. It carries out the reaction D-galactose + O2 = D-galactono-1,5-lactone + H2O2. It catalyses the reaction D-cellobiose + O2 = D-cellobiono-1,5-lactone + H2O2. The catalysed reaction is beta-lactose + O2 = lactobiono-1,5-lactone + H2O2. The enzyme catalyses D-maltose + O2 = D-maltobiono-1,5-lactone + H2O2. It carries out the reaction D-xylose + O2 = D-xylono-1,5-lactone + H2O2. In terms of biological role, catalyzes the selective oxidation of C1 hydroxyl moieties on mono-, oligo- and polysaccharides with concomitant reduction of molecular oxygen to hydrogen peroxide. This results in the formation of the corresponding lactones, which typically undergo spontaneous hydrolysis. Carbohydrate oxidase is able to oxidize a variety of substrates including D-glucose, D-galactose, D-xylose, D-maltose, D-cellobiose, and lactose. In addition, among various oligosaccharides, the enzyme preferred tetrameric dextrins, indicating a favorable interaction of four linked glucose units with the substrate binding pocket. This chain is Carbohydrate oxidase, found in Microdochium nivale (Pink snow mold).